We begin with the raw amino-acid sequence, 88 residues long: Small ribosomal subunit protein uS17 (88 aa).

The protein belongs to the universal ribosomal protein uS17 family. In terms of assembly, part of the 30S ribosomal subunit.

One of the primary rRNA binding proteins, it binds specifically to the 5'-end of 16S ribosomal RNA. This Nitrosospira multiformis (strain ATCC 25196 / NCIMB 11849 / C 71) protein is Small ribosomal subunit protein uS17.